Reading from the N-terminus, the 231-residue chain is Small ribosomal subunit protein uS5 (231 aa).

Residues 1–63 (MADLENKTVK…KSVDRANKVK (63 aa)) are disordered. The segment covering 29–60 (KRTESGAKKQIWEKRSAHDSKDMPKKSVDRAN) has biased composition (basic and acidic residues). Residues 75–138 (FSEKVVNISR…KDARNHLISV (64 aa)) enclose the S5 DRBM domain.

Belongs to the universal ribosomal protein uS5 family. Part of the 30S ribosomal subunit. Contacts proteins S4 and S8.

In terms of biological role, with S4 and S12 plays an important role in translational accuracy. Functionally, located at the back of the 30S subunit body where it stabilizes the conformation of the head with respect to the body. The polypeptide is Small ribosomal subunit protein uS5 (Mycoplasmopsis agalactiae (strain NCTC 10123 / CIP 59.7 / PG2) (Mycoplasma agalactiae)).